The chain runs to 140 residues: Oocyte zinc finger protein XlCOF15 (140 aa).

C2H2-type zinc fingers lie at residues 6–28, 34–56, 62–84, 90–112, and 118–140; these read FTCKECSKSFSSNSHLSRHQKIH, FTCTECDKKFLTRSSLLLHQKVH, FICTECGKGFSAKSQLHRHHVIH, FTCAECGKTFSYKQSLVTHRAAH, and FICTECGKSFSHKNNLQTHLKSH.

The protein belongs to the krueppel C2H2-type zinc-finger protein family.

Its subcellular location is the nucleus. May be involved in transcriptional regulation. The polypeptide is Oocyte zinc finger protein XlCOF15 (Xenopus laevis (African clawed frog)).